Here is a 384-residue protein sequence, read N- to C-terminus: PqqA peptide cyclase (384 aa).

In terms of domain architecture, Radical SAM core spans 14-230; that stretch reads IPAPVGLLAE…EAARERLKGQ (217 aa). Residues Cys-28, Cys-32, and Cys-35 each coordinate [4Fe-4S] cluster.

It belongs to the radical SAM superfamily. PqqE family. In terms of assembly, interacts with PqqD. The interaction is necessary for activity of PqqE. It depends on [4Fe-4S] cluster as a cofactor.

The enzyme catalyses [PQQ precursor protein] + S-adenosyl-L-methionine = E-Y cross-linked-[PQQ precursor protein] + 5'-deoxyadenosine + L-methionine + H(+). It participates in cofactor biosynthesis; pyrroloquinoline quinone biosynthesis. Catalyzes the cross-linking of a glutamate residue and a tyrosine residue in the PqqA protein as part of the biosynthesis of pyrroloquinoline quinone (PQQ). This chain is PqqA peptide cyclase, found in Methylorubrum extorquens (strain CM4 / NCIMB 13688) (Methylobacterium extorquens).